The primary structure comprises 551 residues: Dihydroxy-acid dehydratase (551 aa).

A Mg(2+)-binding site is contributed by D78. Position 119 (C119) interacts with [2Fe-2S] cluster. Mg(2+)-binding residues include D120 and K121. K121 is modified (N6-carboxylysine). C191 serves as a coordination point for [2Fe-2S] cluster. E442 contacts Mg(2+). S468 functions as the Proton acceptor in the catalytic mechanism.

It belongs to the IlvD/Edd family. In terms of assembly, homodimer. [2Fe-2S] cluster is required as a cofactor. Mg(2+) serves as cofactor.

The enzyme catalyses (2R)-2,3-dihydroxy-3-methylbutanoate = 3-methyl-2-oxobutanoate + H2O. It carries out the reaction (2R,3R)-2,3-dihydroxy-3-methylpentanoate = (S)-3-methyl-2-oxopentanoate + H2O. It functions in the pathway amino-acid biosynthesis; L-isoleucine biosynthesis; L-isoleucine from 2-oxobutanoate: step 3/4. The protein operates within amino-acid biosynthesis; L-valine biosynthesis; L-valine from pyruvate: step 3/4. Its function is as follows. Functions in the biosynthesis of branched-chain amino acids. Catalyzes the dehydration of (2R,3R)-2,3-dihydroxy-3-methylpentanoate (2,3-dihydroxy-3-methylvalerate) into 2-oxo-3-methylpentanoate (2-oxo-3-methylvalerate) and of (2R)-2,3-dihydroxy-3-methylbutanoate (2,3-dihydroxyisovalerate) into 2-oxo-3-methylbutanoate (2-oxoisovalerate), the penultimate precursor to L-isoleucine and L-valine, respectively. This chain is Dihydroxy-acid dehydratase, found in Halothermothrix orenii (strain H 168 / OCM 544 / DSM 9562).